The sequence spans 338 residues: 1-aminocyclopropane-1-carboxylate deaminase (338 aa).

Lys51 is subject to N6-(pyridoxal phosphate)lysine. Ser78 (nucleophile) is an active-site residue.

It belongs to the ACC deaminase/D-cysteine desulfhydrase family. In terms of assembly, homotrimer. Pyridoxal 5'-phosphate serves as cofactor.

The catalysed reaction is 1-aminocyclopropane-1-carboxylate + H2O = 2-oxobutanoate + NH4(+). Functionally, catalyzes a cyclopropane ring-opening reaction, the irreversible conversion of 1-aminocyclopropane-1-carboxylate (ACC) to ammonia and alpha-ketobutyrate. Allows growth on ACC as a nitrogen source. This is 1-aminocyclopropane-1-carboxylate deaminase from Acidovorax ebreus (strain TPSY) (Diaphorobacter sp. (strain TPSY)).